The sequence spans 326 residues: Putative HTH-type transcriptional regulatory protein MMP0678 (326 aa).

The HTH cro/C1-type domain occupies 128-183; sequence LRETREKLKISVGELAEVSRVSRKTIYKYEQNEANPSAEVAIKIEEYLDVPLIKGI. Residues 139-158 constitute a DNA-binding region (H-T-H motif); the sequence is VGELAEVSRVSRKTIYKYEQ.

This is Putative HTH-type transcriptional regulatory protein MMP0678 from Methanococcus maripaludis (strain DSM 14266 / JCM 13030 / NBRC 101832 / S2 / LL).